The sequence spans 490 residues: 5'-3' exonuclease PLD3 (490 aa).

Over 1–38 (MKPKLMYQELKVPAEEPANELPMNEIEAWKAAEKKARW) the chain is Cytoplasmic. The helical; Signal-anchor for type II membrane protein transmembrane segment at 39 to 59 (VLLVLILAVVGFGALMTQLFL) threads the bilayer. The Lumenal portion of the chain corresponds to 60–490 (WEYGDLHLFG…DSVGNACRLL (431 aa)). Disulfide bonds link Cys77/Cys239 and Cys81/Cys237. N-linked (GlcNAc...) asparagine glycans are attached at residues Asn97 and Asn132. The PLD phosphodiesterase 1 domain maps to 196–223 (THGVLHTKFWVVDQTHFYLGSANMDWRS). Residues His201, Lys203, and Asp208 contribute to the active site. His201 acts as the Proton donor in catalysis. Phosphate contacts are provided by His201 and Lys203. A phosphate-binding site is contributed by Asn218. 3 N-linked (GlcNAc...) asparagine glycosylation sites follow: Asn236, Asn284, and Asn387. Cys366 and Cys487 are oxidised to a cystine. The 27-residue stretch at 411-437 (YARVNHNKYMVTERATYIGTSNWSGNY) folds into the PLD phosphodiesterase 2 domain. Position 416 (His416) interacts with phosphate. His416 serves as the catalytic Nucleophile. Residue Phe438 coordinates Mg(2+).

The protein belongs to the phospholipase D family. In terms of assembly, homodimer. Interacts with APP. In terms of processing, N-glycosylated. Proteolytically processed to a soluble form that is stable within endosomes and lysosomes. During transport through the secretory pathway becomes proteolysed by cysteine proteases, thereby releasing a stable soluble lysosomal lumenal polypeptide, whereas the transmembrane-bound fragment is rapidly degraded. Its transport route to lysosomes involves ubiquitination and the ESCRT complex. Post-translationally, ubiquitinated. Ubiquitination mediates sorting into lysosomes.

It is found in the endoplasmic reticulum membrane. The protein resides in the lysosome lumen. The protein localises to the early endosome membrane. It localises to the late endosome membrane. Its subcellular location is the golgi apparatus membrane. It is found in the endosome membrane. It catalyses the reaction Exonucleolytic cleavage in the 5'- to 3'-direction to yield nucleoside 3'-phosphates.. The enzyme catalyses a 5'-end 5'-dephospho-ribonucleotidyl-ribonucleotide-RNA + H2O = a ribonucleoside 3'-phosphate + a 5'-end dephospho-ribonucleoside-RNA + H(+). The catalysed reaction is a ribonucleoside 3'-phosphate-2'-3'-cyclophospho-GMP + H2O = a ribonucleoside 3'-phosphate + 2',3'-cyclophospho-GMP + H(+). It carries out the reaction a 5'-end 5'-dephospho-2'-deoxyribonucleotidyl-2'-deoxyribonucleotide in single-stranded DNA + H2O = a 5'-end dephospho-2'-deoxyribonucleoside in single-stranded DNA + a 2'-deoxyribonucleoside 3'-phosphate + H(+). It catalyses the reaction a 5'-end 5'-phospho-2'-deoxyribonucleotide in single-stranded DNA + H2O = a 5'-end 5'-dephospho-2'-deoxyribonucleotide in single-stranded DNA + phosphate. The enzyme catalyses a 3-lyso-sn-glycero-1-phospho-(3'-acyl-1'-sn-glycerol) + a 1-acyl-sn-glycerol = a 3-acyl-sn-glycero-1-phospho-(3'-acyl-1'-sn-glycerol) + glycerol. The catalysed reaction is 3-lyso-sn-glycero-1-phospho-(3'-(9Z-octadecenoyl)-1'-sn-glycerol) + 1-(9Z-octadecenoyl)-sn-glycerol = 3-(9Z-octadecenoyl)-sn-glycero-1-phospho-(3'-(9Z-octadecenoyl)-1'-sn-glycerol) + glycerol. In terms of biological role, 5'-&gt;3' exonuclease that hydrolyzes the phosphodiester bond of single-stranded DNA (ssDNA) and RNA molecules to form nucleoside 3'-monophosphates and 5'-end 5'-hydroxy deoxyribonucleotide/ribonucleotide fragments. Partially redundant with PLD4, can cleave all four nucleotides displaying higher efficiency for ssDNA and RNA fragments initiated with uridine and guanosine residues and lower efficiency for cytidine-initiated substrates. As a result, it does not always degrade polynucleotides to the single nucleotide level, it can stall at specific sites sparing certain fragments from exonucleolytic degradation. Processes self and pathogenic ssDNA and RNA molecules that reach the endolysosomal compartment via phagocytosis or autophagy and may serve as 'danger' signals for recognition by innate immune receptors such as toll-like receptors (TLRs). Degrades mitochondrial CpG-rich ssDNA fragments to prevent TLR9 activation and autoinflammatory response, but it can cleave viral RNA to generate ligands for TLR7 activation and initiate antiviral immune responses. In plasmacytoid dendritic cells, it cooperates with endonuclease RNASET2 to release 2',3'-cyclic guanosine monophosphate (2',3'-cGMP), a potent stimulatory ligand for TLR7. Produces 2',3'-cGMPs and cytidine-rich RNA fragments that occupy TLR7 ligand-binding pockets and trigger a signaling-competent state. Can exert polynucleotide phosphatase activity toward 5'-phosphorylated ssDNA substrates although at a slow rate. Transphosphatidylase that catalyzes the exchange with R to S stereo-inversion of the glycerol moiety between (S,R)-lysophosphatidylglycerol (LPG) and monoacylglycerol (MAG) substrates to yield (S,S)-bis(monoacylglycero)phosphate (BMP). Can synthesize a variety of (S,S)-BMPs representing the main phospholipid constituent of lysosomal intralumenal vesicle (ILV) membranes that bind acid hydrolases for lipid degradation. Regulates the homeostasis and interorganellar communication of the endolysosomal system with an overall impact on cellular removal of dysfunctional organelles via autophagy as well as proper protein and lipid turnover. May play a role in myotube formation in response to ER stress. This is 5'-3' exonuclease PLD3 (PLD3) from Pongo abelii (Sumatran orangutan).